Reading from the N-terminus, the 699-residue chain is Endoplasmic reticulum mannosyl-oligosaccharide 1,2-alpha-mannosidase (699 aa).

The Cytoplasmic segment spans residues M1–N84. A helical; Signal-anchor for type II membrane protein membrane pass occupies residues M85 to A105. The Lumenal segment spans residues D106–A699. The tract at residues I125–P243 is disordered. Positions D176–P201 are enriched in basic and acidic residues. E330 (proton donor) is an active-site residue. D463 is a catalytic residue. Cysteines 527 and 556 form a disulfide. The Proton donor role is filled by E570. E599 is a catalytic residue. Position 688 (T688) interacts with Ca(2+).

The protein belongs to the glycosyl hydrolase 47 family. Ca(2+) is required as a cofactor. Widely expressed.

The protein localises to the endoplasmic reticulum membrane. It catalyses the reaction N(4)-(alpha-D-Man-(1-&gt;2)-alpha-D-Man-(1-&gt;2)-alpha-D-Man-(1-&gt;3)-[alpha-D-Man-(1-&gt;2)-alpha-D-Man-(1-&gt;3)-[alpha-D-Man-(1-&gt;2)-alpha-D-Man-(1-&gt;6)]-alpha-D-Man-(1-&gt;6)]-beta-D-Man-(1-&gt;4)-beta-D-GlcNAc-(1-&gt;4)-beta-D-GlcNAc)-L-asparaginyl-[protein] (N-glucan mannose isomer 9A1,2,3B1,2,3) + 4 H2O = N(4)-(alpha-D-Man-(1-&gt;3)-[alpha-D-Man-(1-&gt;3)-[alpha-D-Man-(1-&gt;6)]-alpha-D-Man-(1-&gt;6)]-beta-D-Man-(1-&gt;4)-beta-D-GlcNAc-(1-&gt;4)-beta-D-GlcNAc)-L-asparaginyl-[protein] (N-glucan mannose isomer 5A1,2) + 4 beta-D-mannose. It carries out the reaction N(4)-(alpha-D-Man-(1-&gt;2)-alpha-D-Man-(1-&gt;2)-alpha-D-Man-(1-&gt;3)-[alpha-D-Man-(1-&gt;3)-[alpha-D-Man-(1-&gt;2)-alpha-D-Man-(1-&gt;6)]-alpha-D-Man-(1-&gt;6)]-beta-D-Man-(1-&gt;4)-beta-D-GlcNAc-(1-&gt;4)-beta-D-GlcNAc)-L-asparaginyl-[protein] (N-glucan mannose isomer 8A1,2,3B1,3) + 3 H2O = N(4)-(alpha-D-Man-(1-&gt;3)-[alpha-D-Man-(1-&gt;3)-[alpha-D-Man-(1-&gt;6)]-alpha-D-Man-(1-&gt;6)]-beta-D-Man-(1-&gt;4)-beta-D-GlcNAc-(1-&gt;4)-beta-D-GlcNAc)-L-asparaginyl-[protein] (N-glucan mannose isomer 5A1,2) + 3 beta-D-mannose. The protein operates within protein modification; protein glycosylation. Its activity is regulated as follows. Inhibited by both 1-deoxymannojirimycin (dMNJ) and kifunensine. Its function is as follows. Involved in glycoprotein quality control targeting of misfolded glycoproteins for degradation. It primarily trims a single alpha-1,2-linked mannose residue from Man(9)GlcNAc(2) to produce Man(8)GlcNAc(2), but at high enzyme concentrations, as found in the ER quality control compartment (ERQC), it further trims the carbohydrates to Man(5-6)GlcNAc(2). This Homo sapiens (Human) protein is Endoplasmic reticulum mannosyl-oligosaccharide 1,2-alpha-mannosidase (MAN1B1).